A 245-amino-acid polypeptide reads, in one-letter code: 1-(5-phosphoribosyl)-5-[(5-phosphoribosylamino)methylideneamino] imidazole-4-carboxamide isomerase (245 aa).

Asp7 acts as the Proton acceptor in catalysis. The active-site Proton donor is Asp129.

Belongs to the HisA/HisF family.

The protein resides in the cytoplasm. It catalyses the reaction 1-(5-phospho-beta-D-ribosyl)-5-[(5-phospho-beta-D-ribosylamino)methylideneamino]imidazole-4-carboxamide = 5-[(5-phospho-1-deoxy-D-ribulos-1-ylimino)methylamino]-1-(5-phospho-beta-D-ribosyl)imidazole-4-carboxamide. The protein operates within amino-acid biosynthesis; L-histidine biosynthesis; L-histidine from 5-phospho-alpha-D-ribose 1-diphosphate: step 4/9. This Shewanella baltica (strain OS223) protein is 1-(5-phosphoribosyl)-5-[(5-phosphoribosylamino)methylideneamino] imidazole-4-carboxamide isomerase.